The chain runs to 196 residues: Regulator of G-protein signaling 8 (196 aa).

Ser26 bears the Phosphoserine mark. The 117-residue stretch at 72-188 (SFDVLLSHKY…LRSKMYLDLL (117 aa)) folds into the RGS domain.

Interacts with GNAO1 and GNAI3.

Its subcellular location is the cell membrane. It localises to the membrane. The protein localises to the perikaryon. The protein resides in the cell projection. It is found in the dendrite. Its subcellular location is the nucleus. In terms of biological role, regulates G protein-coupled receptor signaling cascades, including signaling via muscarinic acetylcholine receptor CHRM2 and dopamine receptor DRD2. Inhibits signal transduction by increasing the GTPase activity of G protein alpha subunits, thereby driving them into their inactive GDP-bound form. Modulates the activity of potassium channels that are activated in response to DRD2 and CHRM2 signaling. In Macaca fascicularis (Crab-eating macaque), this protein is Regulator of G-protein signaling 8 (RGS8).